We begin with the raw amino-acid sequence, 101 residues long: Small ribosomal subunit protein uS14 (101 aa).

The interval 33–69 (SQDASYEEKIDASTKLQKLPRDSSPSRHRNRCELSGR) is disordered. The segment covering 51-68 (LPRDSSPSRHRNRCELSG) has biased composition (basic and acidic residues).

Belongs to the universal ribosomal protein uS14 family. In terms of assembly, part of the 30S ribosomal subunit. Contacts proteins S3 and S10.

Its function is as follows. Binds 16S rRNA, required for the assembly of 30S particles and may also be responsible for determining the conformation of the 16S rRNA at the A site. The sequence is that of Small ribosomal subunit protein uS14 from Xanthomonas axonopodis pv. citri (strain 306).